Reading from the N-terminus, the 180-residue chain is RNA polymerase sigma-E factor (180 aa).

A Polymerase core binding motif is present at residues 36-49 (DLLQTALARTYGRW). The H-T-H motif DNA-binding region spans 130 to 149 (TEETAAALGMSAGTVKSTLH).

It belongs to the sigma-70 factor family. ECF subfamily.

The protein localises to the cytoplasm. In terms of biological role, sigma factors are initiation factors that promote the attachment of RNA polymerase to specific initiation sites and are then released. This sigma factor is required for the synthesis of the antibiotic actinomycin. The chain is RNA polymerase sigma-E factor (sigE) from Streptomyces antibioticus.